The primary structure comprises 447 residues: Multicopper oxidase mco (447 aa).

Basic and acidic residues predominate over residues 1-25 (MMNMKEDKKNTMDMKNMKHHDERKK). A disordered region spans residues 1–28 (MMNMKEDKKNTMDMKNMKHHDERKKLNS). 12 residues coordinate Cu cation: His107, His109, His147, His149, His375, His378, His380, His428, Cys429, His430, His434, and Met439.

It belongs to the multicopper oxidase family. It depends on Cu cation as a cofactor.

Its subcellular location is the cytoplasm. In terms of biological role, may be involved in copper homeostasis and oxidative stress response. The sequence is that of Multicopper oxidase mco (mco) from Staphylococcus epidermidis (strain ATCC 12228 / FDA PCI 1200).